A 393-amino-acid chain; its full sequence is Sialyltransferase-like protein 1 (393 aa).

Over methionine 1–proline 8 the chain is Cytoplasmic. Residues phenylalanine 9–leucine 27 form a helical; Signal-anchor for type II membrane protein membrane-spanning segment. The Lumenal segment spans residues arginine 28 to histidine 393. Residues asparagine 49, asparagine 212, and asparagine 258 are each glycosylated (N-linked (GlcNAc...) asparagine).

The protein belongs to the glycosyltransferase 29 family. As to expression, expressed in leaves and stalks. Expressed at low levels in roots.

It localises to the golgi apparatus membrane. Possesses sialyltransferase-like activity in vitro. Transfers sialic acid to the oligosaccharide Gal-beta-1,3-GalNAc and to glycoproteins such as asialofetuin, alpha-1-acid glycoprotein (NeuAc-alpha-2,3-Gal-beta-1,3-GalNAc-) and andasialo-alpha-1-acid glycoprotein. The transferred sialic acid is linked to galactose of Gal-beta-1,3-GalNAc through alpha-2,6-linkage. This Oryza sativa subsp. japonica (Rice) protein is Sialyltransferase-like protein 1.